A 575-amino-acid polypeptide reads, in one-letter code: Kelch repeat and BTB domain-containing protein 8 (575 aa).

Residues 23-91 form the BTB domain; that stretch reads TDIVVEVDHG…AYTSRVILTE (69 aa). Residues 126–228 enclose the BACK domain; that stretch reads SIGVFIFADH…MEDAFIEKIP (103 aa). 5 Kelch repeats span residues 310-364, 365-415, 417-455, 457-506, and 516-562; these read DIYI…YCCG, KMYA…EHKE, IYVL…VYKD, IYYI…LFQN, and QVTV…FECA.

The protein belongs to the KBTBD8 family. In terms of assembly, component of the BCR(KBTBD8) E3 ubiquitin ligase complex, at least composed of CUL3, KBTBD8 and RBX1.

It localises to the cytoplasm. The protein resides in the cytoskeleton. Its subcellular location is the spindle. It is found in the golgi apparatus. In terms of biological role, substrate-specific adapter of a BCR (BTB-CUL3-RBX1) E3 ubiquitin ligase complex that acts as a regulator of neural crest specification. The BCR(KBTBD8) complex acts by mediating monoubiquitination of NOLC1 and TCOF1: monoubiquitination promotes the formation of a NOLC1-TCOF1 complex that acts as a platform to connect RNA polymerase I with enzymes responsible for ribosomal processing and modification, leading to remodel the translational program of differentiating cells in favor of neural crest specification. This Rattus norvegicus (Rat) protein is Kelch repeat and BTB domain-containing protein 8.